The sequence spans 354 residues: MTLLKNDTFLRALLKQPVEYTPIWMMRQAGRYLPEYKATRAKAGSFLDLCKNTGLATEVTIQPLERFDLDAAILFSDILTVPDAMGLGLYFAEGEGPKFAHALQHESDIAKLHVPDMEKLQYVFDAVTSIRKALDGRVPLIGFSGSPFTLACYMVEGGGSKEFRTIKTMMYSRPDLLYKILDTNAQAVTAYLNAQIDAGAQAVQIFDTWGGVLSDAAFKEFSLKYIRQIVAGLKRESEGRRVPVIVFAKGGGLWLESMVQIGADALGLDWTCNIGEARRRVGNQVALQGNFDPSALFGTPESIRTEVARILTGYGHGSGHVFNLGHGINQHADPEHAKILVDTVHELSRQYHGG.

Residues 27–31, aspartate 77, tyrosine 153, threonine 208, and histidine 326 each bind substrate; that span reads RQAGR.

It belongs to the uroporphyrinogen decarboxylase family. Homodimer.

It localises to the cytoplasm. The catalysed reaction is uroporphyrinogen III + 4 H(+) = coproporphyrinogen III + 4 CO2. It functions in the pathway porphyrin-containing compound metabolism; protoporphyrin-IX biosynthesis; coproporphyrinogen-III from 5-aminolevulinate: step 4/4. Functionally, catalyzes the decarboxylation of four acetate groups of uroporphyrinogen-III to yield coproporphyrinogen-III. The chain is Uroporphyrinogen decarboxylase from Neisseria gonorrhoeae (strain NCCP11945).